An 891-amino-acid chain; its full sequence is Alanine--tRNA ligase (891 aa).

Zn(2+) contacts are provided by His564, His568, Cys681, and His685.

It belongs to the class-II aminoacyl-tRNA synthetase family. Requires Zn(2+) as cofactor.

It is found in the cytoplasm. It catalyses the reaction tRNA(Ala) + L-alanine + ATP = L-alanyl-tRNA(Ala) + AMP + diphosphate. Its function is as follows. Catalyzes the attachment of alanine to tRNA(Ala) in a two-step reaction: alanine is first activated by ATP to form Ala-AMP and then transferred to the acceptor end of tRNA(Ala). Also edits incorrectly charged Ser-tRNA(Ala) and Gly-tRNA(Ala) via its editing domain. In Methylorubrum populi (strain ATCC BAA-705 / NCIMB 13946 / BJ001) (Methylobacterium populi), this protein is Alanine--tRNA ligase.